The primary structure comprises 638 residues: MGIRGMLRAAALLLLIRTWLAESNGPSPTPKFHFELSSSTPEVILDLFNCKNCANEAVVQKILDRVLSTYDVRLRPNFGGAPVPVSVSIYVSSIEQISEINMDYTITMFLHQTWKDTRLAYYETNLNLTLDYRMHEKLWVPDCYFVNSKDAFVHDVTVENRVFQLHPDGTVRYGIRLTTTAACSLDLQKFPMDKQSCKLEVESYGYTVEDIVLSWEDDNAIHITDGLHIPQYTYLGRTITSKEVYFYTGSYMRLIVKFQVQREVRSYLVQVYWPTVLTTILSWISFWMNYDSSAARVTIGLTSILVLTTIDSHMRDKLPHISCIKAIDIYILVCLFFVFLSLLEYVYINYLFFSQVPRRNHRRCRKPRRVVARYRYQEVVVANVQDGLINVEDRVEDRAGPLPDSPMQAHLASQESLGSLVFTSEQAQLATSESLSLLSSASSQTQLATGESLSDLPSTSEQTVPECTIHFHGFLTNDSIIPIKIHSRSDACDDEDSEESLSSEESHGHGSSHTGRLKLQISQRCVQEASWDLDKIEILQDDISITSSWLGLDEQCKGDADSIWSLTDEELMACDQEKDSSSESEENCSPSPGCSFNEGFSFQLFKPNRVPKVDRWSRFLFPLSFGLFNVVYWLYHVY.

A signal peptide spans 1–21 (MGIRGMLRAAALLLLIRTWLA). At 22–267 (ESNGPSPTPK…FQVQREVRSY (246 aa)) the chain is on the extracellular side. An N-linked (GlcNAc...) asparagine glycan is attached at Asn127. Cysteines 183 and 197 form a disulfide. A helical transmembrane segment spans residues 268–288 (LVQVYWPTVLTTILSWISFWM). Residues 289–296 (NYDSSAAR) lie on the Cytoplasmic side of the membrane. A helical transmembrane segment spans residues 297–314 (VTIGLTSILVLTTIDSHM). Topologically, residues 315 to 325 (RDKLPHISCIK) are extracellular. A helical transmembrane segment spans residues 326 to 346 (AIDIYILVCLFFVFLSLLEYV). Topologically, residues 347 to 617 (YINYLFFSQV…NRVPKVDRWS (271 aa)) are cytoplasmic. Residues 491–515 (ACDDEDSEESLSSEESHGHGSSHTG) form a disordered region. Over residues 492 to 502 (CDDEDSEESLS) the composition is skewed to acidic residues. The chain crosses the membrane as a helical span at residues 618–638 (RFLFPLSFGLFNVVYWLYHVY).

This sequence belongs to the ligand-gated ion channel (TC 1.A.9) family. Gamma-aminobutyric acid receptor (TC 1.A.9.5) subfamily. GABRQ sub-subfamily. As to quaternary structure, heteropentamer, formed by a combination of alpha (GABRA1-6), beta (GABRB1-3), gamma (GABRG1-3), delta (GABRD), epsilon (GABRE), rho (GABRR1-3), pi (GABRP) and theta (GABRQ) chains, each subunit exhibiting distinct physiological and pharmacological properties. Expressed in brain, lung, and spleen.

It localises to the postsynaptic cell membrane. The protein localises to the cell membrane. It catalyses the reaction chloride(in) = chloride(out). Potentiated by etomidate, propofol, pregnanolone and pentobarbital. Its function is as follows. Theta subunit of the heteropentameric ligand-gated chloride channel gated by gamma-aminobutyric acid (GABA), a major inhibitory neurotransmitter in the brain. GABA-gated chloride channels, also named GABA(A) receptors (GABAAR), consist of five subunits arranged around a central pore and contain GABA active binding site(s) located at the alpha and beta subunit interfaces. When activated by GABA, GABAARs selectively allow the flow of chloride anions across the cell membrane down their electrochemical gradient. In Mus musculus (Mouse), this protein is Gamma-aminobutyric acid receptor subunit theta.